Consider the following 397-residue polypeptide: 2,3-bisphosphoglycerate-independent phosphoglycerate mutase (397 aa).

The protein belongs to the BPG-independent phosphoglycerate mutase family. A-PGAM subfamily.

It carries out the reaction (2R)-2-phosphoglycerate = (2R)-3-phosphoglycerate. Its pathway is carbohydrate degradation; glycolysis; pyruvate from D-glyceraldehyde 3-phosphate: step 3/5. In terms of biological role, catalyzes the interconversion of 2-phosphoglycerate and 3-phosphoglycerate. The protein is 2,3-bisphosphoglycerate-independent phosphoglycerate mutase of Methanosarcina acetivorans (strain ATCC 35395 / DSM 2834 / JCM 12185 / C2A).